The primary structure comprises 89 residues: Small ribosomal subunit protein uS15 (89 aa).

This sequence belongs to the universal ribosomal protein uS15 family. In terms of assembly, part of the 30S ribosomal subunit. Forms a bridge to the 50S subunit in the 70S ribosome, contacting the 23S rRNA.

Its function is as follows. One of the primary rRNA binding proteins, it binds directly to 16S rRNA where it helps nucleate assembly of the platform of the 30S subunit by binding and bridging several RNA helices of the 16S rRNA. Forms an intersubunit bridge (bridge B4) with the 23S rRNA of the 50S subunit in the ribosome. In Pseudomonas entomophila (strain L48), this protein is Small ribosomal subunit protein uS15.